We begin with the raw amino-acid sequence, 417 residues long: D-galactonate dehydratase family member SeV_A0456 (417 aa).

Residues Gln43 and His127 each contribute to the substrate site. Tyr158 serves as the catalytic Proton donor/acceptor. A Mg(2+)-binding site is contributed by Asp223. The active-site Proton donor/acceptor is His225. Positions 249 and 275 each coordinate Mg(2+). Substrate contacts are provided by Glu275, Arg296, His325, Asp329, and Glu352.

Belongs to the mandelate racemase/muconate lactonizing enzyme family. GalD subfamily. It depends on Mg(2+) as a cofactor.

It catalyses the reaction D-gluconate = 2-dehydro-3-deoxy-D-gluconate + H2O. Functionally, has low D-gluconate dehydratase activity (in vitro), suggesting that it has no significant role in D-gluconate degradation in vivo. Has no detectable activity with a panel of 70 other acid sugars (in vitro). In Salmonella virchow (strain SL491), this protein is D-galactonate dehydratase family member SeV_A0456.